A 590-amino-acid polypeptide reads, in one-letter code: 2-isopropylmalate synthase (590 aa).

Residues P40–D314 enclose the Pyruvate carboxyltransferase domain. 4 residues coordinate Mg(2+): D49, H253, H255, and N289. Residues A456–V590 are regulatory domain.

It belongs to the alpha-IPM synthase/homocitrate synthase family. LeuA type 2 subfamily. As to quaternary structure, homodimer. Requires Mg(2+) as cofactor.

Its subcellular location is the cytoplasm. It catalyses the reaction 3-methyl-2-oxobutanoate + acetyl-CoA + H2O = (2S)-2-isopropylmalate + CoA + H(+). The protein operates within amino-acid biosynthesis; L-leucine biosynthesis; L-leucine from 3-methyl-2-oxobutanoate: step 1/4. In terms of biological role, catalyzes the condensation of the acetyl group of acetyl-CoA with 3-methyl-2-oxobutanoate (2-ketoisovalerate) to form 3-carboxy-3-hydroxy-4-methylpentanoate (2-isopropylmalate). In Leifsonia xyli subsp. xyli (strain CTCB07), this protein is 2-isopropylmalate synthase.